We begin with the raw amino-acid sequence, 208 residues long: Thymidylate kinase (208 aa).

7 to 14 (GIDGAGKT) provides a ligand contact to ATP.

Belongs to the thymidylate kinase family.

The enzyme catalyses dTMP + ATP = dTDP + ADP. In terms of biological role, phosphorylation of dTMP to form dTDP in both de novo and salvage pathways of dTTP synthesis. This chain is Thymidylate kinase, found in Xylella fastidiosa (strain Temecula1 / ATCC 700964).